Reading from the N-terminus, the 262-residue chain is Thiazole synthase (262 aa).

Lys104 functions as the Schiff-base intermediate with DXP in the catalytic mechanism. 1-deoxy-D-xylulose 5-phosphate is bound by residues Gly165, 191–192, and 213–214; these read AG and NT.

The protein belongs to the ThiG family. As to quaternary structure, homotetramer. Forms heterodimers with either ThiH or ThiS.

The protein resides in the cytoplasm. It carries out the reaction [ThiS sulfur-carrier protein]-C-terminal-Gly-aminoethanethioate + 2-iminoacetate + 1-deoxy-D-xylulose 5-phosphate = [ThiS sulfur-carrier protein]-C-terminal Gly-Gly + 2-[(2R,5Z)-2-carboxy-4-methylthiazol-5(2H)-ylidene]ethyl phosphate + 2 H2O + H(+). It functions in the pathway cofactor biosynthesis; thiamine diphosphate biosynthesis. Functionally, catalyzes the rearrangement of 1-deoxy-D-xylulose 5-phosphate (DXP) to produce the thiazole phosphate moiety of thiamine. Sulfur is provided by the thiocarboxylate moiety of the carrier protein ThiS. In vitro, sulfur can be provided by H(2)S. The protein is Thiazole synthase of Nitrosococcus oceani (strain ATCC 19707 / BCRC 17464 / JCM 30415 / NCIMB 11848 / C-107).